Reading from the N-terminus, the 236-residue chain is Lipid A 4'-phosphatase (236 aa).

Helical transmembrane passes span 26–46 (FFYLISAKWTWVIMSIAFLFF), 58–78 (FIVGAVLLSVLICDQLSSSFF), 134–153 (YTWTIWSVVALVIYSRIYIG), 160–182 (IIPGIAVGLIVGHFVYKVYLYAR), and 200–220 (GDSIRLWTLSLIGFVFAMLCM).

The protein belongs to the lipid A LpxF 4'-phosphatase family.

The protein resides in the cell inner membrane. It functions in the pathway bacterial outer membrane biogenesis; LPS lipid A biosynthesis. Its function is as follows. Removes the 4'-phosphate group from lipid A species. Absence of phosphate groups in lipid A renders the bacteria resistant to host-derived cationic antimicrobial peptides (CAMP) and allows it to camouflage itself from the host innate immune response. Removal of the 4'-phosphate may be required to generate the substrate for deacylation of the pentaacyl lipid A to the tetraccylated lipid A species. The chain is Lipid A 4'-phosphatase from Porphyromonas gingivalis (strain ATCC 33277 / DSM 20709 / CIP 103683 / JCM 12257 / NCTC 11834 / 2561).